A 210-amino-acid polypeptide reads, in one-letter code: dTTP/UTP pyrophosphatase (210 aa).

The active-site Proton acceptor is the D89.

Belongs to the Maf family. YhdE subfamily. It depends on a divalent metal cation as a cofactor.

Its subcellular location is the cytoplasm. The enzyme catalyses dTTP + H2O = dTMP + diphosphate + H(+). It catalyses the reaction UTP + H2O = UMP + diphosphate + H(+). In terms of biological role, nucleoside triphosphate pyrophosphatase that hydrolyzes dTTP and UTP. May have a dual role in cell division arrest and in preventing the incorporation of modified nucleotides into cellular nucleic acids. In Burkholderia lata (strain ATCC 17760 / DSM 23089 / LMG 22485 / NCIMB 9086 / R18194 / 383), this protein is dTTP/UTP pyrophosphatase.